The following is a 305-amino-acid chain: Sulfate adenylyltransferase subunit 2 (305 aa).

It belongs to the PAPS reductase family. CysD subfamily. In terms of assembly, heterodimer composed of CysD, the smaller subunit, and CysN.

It catalyses the reaction sulfate + ATP + H(+) = adenosine 5'-phosphosulfate + diphosphate. The protein operates within sulfur metabolism; hydrogen sulfide biosynthesis; sulfite from sulfate: step 1/3. Functionally, with CysN forms the ATP sulfurylase (ATPS) that catalyzes the adenylation of sulfate producing adenosine 5'-phosphosulfate (APS) and diphosphate, the first enzymatic step in sulfur assimilation pathway. APS synthesis involves the formation of a high-energy phosphoric-sulfuric acid anhydride bond driven by GTP hydrolysis by CysN coupled to ATP hydrolysis by CysD. The sequence is that of Sulfate adenylyltransferase subunit 2 from Pseudomonas aeruginosa (strain LESB58).